A 110-amino-acid polypeptide reads, in one-letter code: Large ribosomal subunit protein uL22 (110 aa).

It belongs to the universal ribosomal protein uL22 family. As to quaternary structure, part of the 50S ribosomal subunit.

In terms of biological role, this protein binds specifically to 23S rRNA; its binding is stimulated by other ribosomal proteins, e.g. L4, L17, and L20. It is important during the early stages of 50S assembly. It makes multiple contacts with different domains of the 23S rRNA in the assembled 50S subunit and ribosome. The globular domain of the protein is located near the polypeptide exit tunnel on the outside of the subunit, while an extended beta-hairpin is found that lines the wall of the exit tunnel in the center of the 70S ribosome. The polypeptide is Large ribosomal subunit protein uL22 (Acinetobacter baumannii (strain ACICU)).